The chain runs to 114 residues: Gas vesicle protein J (114 aa).

Residues 63–114 are disordered; sequence PTGTDMERVEEAAGISPDESRSLDTRSESEQMDELPGEAGASVSNTAPQEEE. Residues 80-91 show a composition bias toward basic and acidic residues; the sequence is DESRSLDTRSES. Residues 104 to 114 show a composition bias toward polar residues; sequence SVSNTAPQEEE.

This sequence belongs to the gas vesicle GvpA family. GvpF to GvpM interact with each other in vitro, and may form multi-subunit complex(es). Interacts with GvpA.

It is found in the gas vesicle. Its function is as follows. A minor component of the gas vesicle, proteins GvpF to GvpM might be involved in nucleating gas vesicle formation. Gas vesicles are hollow, gas filled proteinaceous nanostructures found in some microorganisms. They allow positioning of halobacteria at the optimal depth for growth in the poorly aerated, shallow brine pools of their habitat. Functionally, expression of a 9.5 kb mc-vac DNA fragment containing 2 divergently transcribed regions (gvpD-gvpE-gvpF-gvpG-gvpH-gvpI-gvpJ-gvpK-gvpL-gvpM and gvpA-gvpC-gvpN-gvpO) allows H.volcanii to produce gas vesicles. The sequence is that of Gas vesicle protein J from Haloferax mediterranei (strain ATCC 33500 / DSM 1411 / JCM 8866 / NBRC 14739 / NCIMB 2177 / R-4) (Halobacterium mediterranei).